The sequence spans 218 residues: Superoxide dismutase [Mn] 1 (218 aa).

The Mn(2+) site is built by H43, H98, D180, and H184.

Belongs to the iron/manganese superoxide dismutase family. In terms of assembly, homodimer. It depends on Mn(2+) as a cofactor.

The catalysed reaction is 2 superoxide + 2 H(+) = H2O2 + O2. Its function is as follows. Destroys superoxide anion radicals which are normally produced within the cells and which are toxic to biological systems. In Bacillus cereus (strain ATCC 14579 / DSM 31 / CCUG 7414 / JCM 2152 / NBRC 15305 / NCIMB 9373 / NCTC 2599 / NRRL B-3711), this protein is Superoxide dismutase [Mn] 1 (sodA1).